We begin with the raw amino-acid sequence, 130 residues long: Large ribosomal subunit protein bL17 (130 aa).

The protein belongs to the bacterial ribosomal protein bL17 family. Part of the 50S ribosomal subunit. Contacts protein L32.

The polypeptide is Large ribosomal subunit protein bL17 (Paraburkholderia xenovorans (strain LB400)).